Consider the following 354-residue polypeptide: Protein-arginine kinase (354 aa).

One can recognise a Phosphagen kinase C-terminal domain in the interval 24 to 254 (IVLSSRIRLA…QQIIQQEKLA (231 aa)). Residues 27–31 (SSRIR), His-92, Arg-125, 176–180 (RASVM), and 207–212 (RGIYGE) each bind ATP. The RDXXRA motif of the pArg binding pocket involved in allosteric regulation signature appears at 337-342 (RDYRRA).

This sequence belongs to the ATP:guanido phosphotransferase family.

It carries out the reaction L-arginyl-[protein] + ATP = N(omega)-phospho-L-arginyl-[protein] + ADP + H(+). Its activity is regulated as follows. Appears to be allosterically activated by the binding of pArg-containing polypeptides to the pArg-binding pocket localized in the C-terminal domain of McsB. Catalyzes the specific phosphorylation of arginine residues in a large number of proteins. Is part of the bacterial stress response system. Protein arginine phosphorylation has a physiologically important role and is involved in the regulation of many critical cellular processes, such as protein homeostasis, motility, competence, and stringent and stress responses, by regulating gene expression and protein activity. This chain is Protein-arginine kinase, found in Bacillus cereus (strain B4264).